Here is a 357-residue protein sequence, read N- to C-terminus: Trans-resveratrol di-O-methyltransferase (357 aa).

Residues Gly200, Asp223, Asp243, Met244, and Lys257 each contribute to the S-adenosyl-L-methionine site. Residue His261 is the Proton acceptor of the active site.

The protein belongs to the class I-like SAM-binding methyltransferase superfamily. Cation-independent O-methyltransferase family. COMT subfamily.

The catalysed reaction is trans-resveratrol + 2 S-adenosyl-L-methionine = pterostilbene + 2 S-adenosyl-L-homocysteine + 2 H(+). Its function is as follows. Catalyzes the biosynthesis of pterostilbene from resveratrol. Pterostilbene has both antifungal and pharmacological properties. Also has activity toward resveratrol monomethyl ether (RME). The sequence is that of Trans-resveratrol di-O-methyltransferase (ROMT) from Vitis vinifera (Grape).